Consider the following 282-residue polypeptide: MKKFVGAHVSASGGVRNAPLNAQKIGAKAFALFTKNQRQWSAKALEEEEIEQFKANLKAAGIAPSCVLPHDSYLINLGHPGEAELAKSREAFLDEMRRCEQLGLDRLNFHPGSHLGAISESECLSRVAESINLALEATSGVIAVIENTAGQGSNVGYDFRHLGEIIDQVHDKSRVGICIDTCHMFSAGYDIRTREAYEASMAILDREVGWCYLKGMHLNDSKVKFQSRVDRHHSLGMGELGIAPFEFIMNDPRMDGIPLILETIDEALWAQEITLLYSLIKE.

The Zn(2+) site is built by H70, H110, E146, D180, H183, H217, D230, H232, and E262.

The protein belongs to the AP endonuclease 2 family. The cofactor is Zn(2+).

The enzyme catalyses Endonucleolytic cleavage to 5'-phosphooligonucleotide end-products.. In terms of biological role, endonuclease IV plays a role in DNA repair. It cleaves phosphodiester bonds at apurinic or apyrimidinic (AP) sites, generating a 3'-hydroxyl group and a 5'-terminal sugar phosphate. In Wolinella succinogenes (strain ATCC 29543 / DSM 1740 / CCUG 13145 / JCM 31913 / LMG 7466 / NCTC 11488 / FDC 602W) (Vibrio succinogenes), this protein is Probable endonuclease 4.